The following is a 920-amino-acid chain: DNA ligase (920 aa).

NAD(+) is bound by residues 90-94 (DAAYD), 139-140 (SL), and Glu-173. The active-site N6-AMP-lysine intermediate is the Lys-175. 4 residues coordinate NAD(+): Arg-196, Glu-235, Lys-360, and Lys-384. Zn(2+)-binding residues include Cys-481, Cys-484, Cys-500, and Cys-506. The interval 662 to 691 (GEAAIESAETQGDTASETTGAPTGAEAPLG) is disordered. A compositionally biased stretch (polar residues) spans 669-682 (AETQGDTASETTGA). Residues 839–920 (SLPQTLAGKT…FAQLLATGTI (82 aa)) form the BRCT domain.

This sequence belongs to the NAD-dependent DNA ligase family. LigA subfamily. The cofactor is Mg(2+). Mn(2+) is required as a cofactor.

The catalysed reaction is NAD(+) + (deoxyribonucleotide)n-3'-hydroxyl + 5'-phospho-(deoxyribonucleotide)m = (deoxyribonucleotide)n+m + AMP + beta-nicotinamide D-nucleotide.. Functionally, DNA ligase that catalyzes the formation of phosphodiester linkages between 5'-phosphoryl and 3'-hydroxyl groups in double-stranded DNA using NAD as a coenzyme and as the energy source for the reaction. It is essential for DNA replication and repair of damaged DNA. This is DNA ligase from Bifidobacterium longum (strain DJO10A).